Here is an 82-residue protein sequence, read N- to C-terminus: Sec-independent protein translocase protein TatA (82 aa).

Residues 1–21 traverse the membrane as a helical segment; the sequence is MGGISIWQLLIIAVIIVLLFG. A disordered region spans residues 48 to 82; sequence PAKEAKKDADFVPQNLEKKEAETVEKQKQNDKEQA.

It belongs to the TatA/E family. As to quaternary structure, the Tat system comprises two distinct complexes: a TatABC complex, containing multiple copies of TatA, TatB and TatC subunits, and a separate TatA complex, containing only TatA subunits. Substrates initially bind to the TatABC complex, which probably triggers association of the separate TatA complex to form the active translocon.

It is found in the cell inner membrane. Functionally, part of the twin-arginine translocation (Tat) system that transports large folded proteins containing a characteristic twin-arginine motif in their signal peptide across membranes. TatA could form the protein-conducting channel of the Tat system. The chain is Sec-independent protein translocase protein TatA from Aliivibrio fischeri (strain ATCC 700601 / ES114) (Vibrio fischeri).